A 935-amino-acid polypeptide reads, in one-letter code: Protein translocase subunit SecA (935 aa).

Residues Gln-90, 108-112, and Asp-504 contribute to the ATP site; that span reads GEGKT. The tract at residues 543–568 is disordered; the sequence is GGRRPQGFGTSKKKGKNWSPSDADIF.

The protein belongs to the SecA family. Monomer and homodimer. Part of the essential Sec protein translocation apparatus which comprises SecA, SecYEG and auxiliary proteins SecDF. Other proteins may also be involved.

The protein localises to the cell inner membrane. It is found in the cellular thylakoid membrane. The protein resides in the cytoplasm. It carries out the reaction ATP + H2O + cellular proteinSide 1 = ADP + phosphate + cellular proteinSide 2.. In terms of biological role, part of the Sec protein translocase complex. Interacts with the SecYEG preprotein conducting channel. Has a central role in coupling the hydrolysis of ATP to the transfer of proteins into and across the cell membrane, serving as an ATP-driven molecular motor driving the stepwise translocation of polypeptide chains across the membrane. Functionally, probably participates in protein translocation into and across both the cytoplasmic and thylakoid membranes in cyanobacterial cells. The protein is Protein translocase subunit SecA of Rippkaea orientalis (strain PCC 8801 / RF-1) (Cyanothece sp. (strain PCC 8801)).